The following is a 30-amino-acid chain: Arsenate respiratory reductase iron-sulfur subunit ArrB (30 aa).

Positions 12, 15, 18, and 22 each coordinate [4Fe-4S] cluster.

Heterodimer composed of one large subunit (ArrA) and one small subunit (ArrB). [4Fe-4S] cluster is required as a cofactor.

It is found in the periplasm. In terms of biological role, component of the arsenate respiratory reductase (Arr) complex, which catalyzes the reduction of arsenate (As(V)) to arsenite (As(III)). ArrB is probably the electron transfer subunit. This is Arsenate respiratory reductase iron-sulfur subunit ArrB from Chrysiogenes arsenatis.